The sequence spans 261 residues: Phosphoribosylaminoimidazole-succinocarboxamide synthase (261 aa).

It belongs to the SAICAR synthetase family.

It catalyses the reaction 5-amino-1-(5-phospho-D-ribosyl)imidazole-4-carboxylate + L-aspartate + ATP = (2S)-2-[5-amino-1-(5-phospho-beta-D-ribosyl)imidazole-4-carboxamido]succinate + ADP + phosphate + 2 H(+). Its pathway is purine metabolism; IMP biosynthesis via de novo pathway; 5-amino-1-(5-phospho-D-ribosyl)imidazole-4-carboxamide from 5-amino-1-(5-phospho-D-ribosyl)imidazole-4-carboxylate: step 1/2. This Novosphingobium aromaticivorans (strain ATCC 700278 / DSM 12444 / CCUG 56034 / CIP 105152 / NBRC 16084 / F199) protein is Phosphoribosylaminoimidazole-succinocarboxamide synthase.